The primary structure comprises 479 residues: Glutamate receptor U1 (479 aa).

The first 17 residues, Met1–Gly17, serve as a signal peptide directing secretion. Topologically, residues Cys18 to Lys163 are extracellular. N-linked (GlcNAc...) asparagine glycosylation is present at Asn79. The chain crosses the membrane as a helical span at residues Glu164–Gly184. Residues Arg185 to Arg229 lie on the Cytoplasmic side of the membrane. Residues Ile230 to Phe250 traverse the membrane as a helical segment. The Extracellular portion of the chain corresponds to Ala251–Thr414. Asn282 is a glycosylation site (N-linked (GlcNAc...) asparagine). Residues Leu415–Ile435 traverse the membrane as a helical segment. The Cytoplasmic portion of the chain corresponds to Glu436–Ser479.

This sequence belongs to the glutamate-gated ion channel (TC 1.A.10.1) family. Homomeric.

The protein resides in the cell membrane. It localises to the postsynaptic cell membrane. In terms of biological role, receptor for glutamate. L-glutamate acts as an excitatory neurotransmitter at many synapses in the central nervous system. The postsynaptic actions of Glu are mediated by a variety of receptors that are named according to their selective agonists. This receptor binds domoate &gt; kainate &gt; AMPA &gt; NBQX &gt; glutamate. This chain is Glutamate receptor U1 (kbp), found in Xenopus laevis (African clawed frog).